We begin with the raw amino-acid sequence, 202 residues long: MDAKRTPPPPTPPNPNPSVIGSGAAADGGGFGRGEAAAATKHMLAFHFLRALSRIHRATPVTRRTRTIRRAAYSSMARAASPRRAWSRALLGQARARRSRTLMRRAAVLVRRRVVAAPAPSPASARGVRIIAAGETSAAARAVPPPPRQQGEPPRADALRRLVPGGAGMEYSSLLEETADYLRSLRAQVQLMQGLVDLFSYQ.

Over residues 1–16 the composition is skewed to pro residues; it reads MDAKRTPPPPTPPNPN. Residues 1-33 are disordered; it reads MDAKRTPPPPTPPNPNPSVIGSGAAADGGGFGR. One can recognise a bHLH domain in the interval 136-185; the sequence is TSAAARAVPPPPRQQGEPPRADALRRLVPGGAGMEYSSLLEETADYLRSL.

It belongs to the bHLH protein family. As to quaternary structure, interacts with ILI1.

Atypical and probable non DNA-binding bHLH transcription factor that acts as a negative regulator of cell elongation and plant development. Binds the transcription factor ILI1 and forms a heterodimer of antagonistic bHLH transcription factors that function downstream of BZR1 to mediate brassinosteroid regulation of cell elongation and lamina inclination. This is Transcription factor IBH1 (IBH1) from Oryza sativa subsp. indica (Rice).